Consider the following 204-residue polypeptide: Peptide deformylase (204 aa).

Fe cation contacts are provided by C131 and H174. E175 is an active-site residue. Fe cation is bound at residue H178.

It belongs to the polypeptide deformylase family. Requires Fe(2+) as cofactor.

It carries out the reaction N-terminal N-formyl-L-methionyl-[peptide] + H2O = N-terminal L-methionyl-[peptide] + formate. In terms of biological role, removes the formyl group from the N-terminal Met of newly synthesized proteins. Requires at least a dipeptide for an efficient rate of reaction. N-terminal L-methionine is a prerequisite for activity but the enzyme has broad specificity at other positions. This chain is Peptide deformylase, found in Streptococcus thermophilus (strain CNRZ 1066).